Consider the following 210-residue polypeptide: Uridine kinase P10 (210 aa).

10–18 (GISGSGKST) provides a ligand contact to ATP. The active site involves aspartate 41.

The protein belongs to the uridine kinase family. As to quaternary structure, interacts with host eIF-2B; this interaction disrupts the interaction between eIF2 and eIF-2B, which leads to the inhibition of stress granules formation.

The protein resides in the host cytoplasm. It is found in the host perinuclear region. It carries out the reaction uridine + ATP = UMP + ADP + H(+). Its function is as follows. Inhibits the integrated stress response (ISR) in the infected cell by preventing the sequestration of eIF2B by phosphorylated EIF2S1/eIF-2alpha. Stress granule formation in response to EIF2S1/eIF-2alpha phosphorylation is thus inhibited, which allows protein synthesis and viral replication. Phosphorylates uridine to uridine monophosphate. This chain is Uridine kinase P10 (ORF10), found in Beluga whale coronavirus (strain SW1) (BwCoV).